Here is a 92-residue protein sequence, read N- to C-terminus: UPF0223 protein SGO_1052 (92 aa).

This sequence belongs to the UPF0223 family.

This Streptococcus gordonii (strain Challis / ATCC 35105 / BCRC 15272 / CH1 / DL1 / V288) protein is UPF0223 protein SGO_1052.